The following is a 161-amino-acid chain: 18.5 kDa class I heat shock protein (161 aa).

Positions 47 to 161 constitute a sHSP domain; that stretch reads ENSAFVSTRV…PDVKAIEISG (115 aa).

Belongs to the small heat shock protein (HSP20) family. In terms of assembly, forms oligomeric structures.

The protein resides in the cytoplasm. This is 18.5 kDa class I heat shock protein (HSP18.5-C) from Glycine max (Soybean).